Here is a 343-residue protein sequence, read N- to C-terminus: D-alanine--D-alanine ligase (343 aa).

An ATP-grasp domain is found at 129-335 (KYVLENFGVK…YGELISEIIE (207 aa)). Position 162-217 (162-217 (ENKLGYDVFIKPSNSGSSVGISKAHNREELEAGLEEALKFDRKVLVEVALNAREIE)) interacts with ATP. D288, E302, and N304 together coordinate Mg(2+).

The protein belongs to the D-alanine--D-alanine ligase family. Mg(2+) serves as cofactor. Mn(2+) is required as a cofactor.

It localises to the cytoplasm. It carries out the reaction 2 D-alanine + ATP = D-alanyl-D-alanine + ADP + phosphate + H(+). It functions in the pathway cell wall biogenesis; peptidoglycan biosynthesis. Cell wall formation. In Clostridium novyi (strain NT), this protein is D-alanine--D-alanine ligase.